A 426-amino-acid polypeptide reads, in one-letter code: D-tagatose-1,6-bisphosphate aldolase subunit KbaZ (426 aa).

The protein belongs to the GatZ/KbaZ family. KbaZ subfamily. In terms of assembly, forms a complex with KbaY.

The protein operates within carbohydrate metabolism; D-tagatose 6-phosphate degradation; D-glyceraldehyde 3-phosphate and glycerone phosphate from D-tagatose 6-phosphate: step 2/2. Functionally, component of the tagatose-1,6-bisphosphate aldolase KbaYZ that is required for full activity and stability of the Y subunit. Could have a chaperone-like function for the proper and stable folding of KbaY. When expressed alone, KbaZ does not show any aldolase activity. This is D-tagatose-1,6-bisphosphate aldolase subunit KbaZ from Escherichia coli O6:K15:H31 (strain 536 / UPEC).